We begin with the raw amino-acid sequence, 118 residues long: Ribonuclease P protein component 4 (118 aa).

4 residues coordinate Zn(2+): Cys-59, Cys-62, Cys-85, and Cys-88.

This sequence belongs to the eukaryotic/archaeal RNase P protein component 4 family. In terms of assembly, consists of a catalytic RNA component and at least 4-5 protein subunits. It depends on Zn(2+) as a cofactor.

Its subcellular location is the cytoplasm. It catalyses the reaction Endonucleolytic cleavage of RNA, removing 5'-extranucleotides from tRNA precursor.. In terms of biological role, part of ribonuclease P, a protein complex that generates mature tRNA molecules by cleaving their 5'-ends. The sequence is that of Ribonuclease P protein component 4 from Sulfolobus acidocaldarius (strain ATCC 33909 / DSM 639 / JCM 8929 / NBRC 15157 / NCIMB 11770).